Consider the following 178-residue polypeptide: Oligoribonuclease (178 aa).

Positions L7–L168 constitute an Exonuclease domain. Residue Y128 is part of the active site.

It belongs to the oligoribonuclease family.

The protein resides in the cytoplasm. Functionally, 3'-to-5' exoribonuclease specific for small oligoribonucleotides. In Pseudomonas savastanoi pv. phaseolicola (strain 1448A / Race 6) (Pseudomonas syringae pv. phaseolicola (strain 1448A / Race 6)), this protein is Oligoribonuclease.